Consider the following 205-residue polypeptide: tRNA 2-(methylsulfanyl)-N(6)-isopentenyladenosine(37) hydroxylase (205 aa).

Residues Glu38, Glu69, His72, Glu122, Glu151, and His154 each contribute to the Fe cation site.

Belongs to the MiaE family. In terms of assembly, homodimer. The cofactor is Fe cation.

It carries out the reaction 2-methylsulfanyl-N(6)-dimethylallyladenosine(37) in tRNA + AH2 + O2 = N(6)-[(2E)-4-hydroxy-3-methylbut-2-en-1-yl]-2-(methylsulfanyl)adenosine(37) in tRNA + A + H2O. The protein operates within tRNA modification; 2-methylthio-N-6-(cis-hydroxy)isopentenyl adenosine-tRNA biosynthesis. Involved in specific tRNA modification. Catalyzes the oxygen-dependent hydroxylation of 2-methylthio-N-6-isopentenyl adenosine (ms2i6A) to produce 2-methylthio-N-6-(cis-hydroxy)isopentenyl adenosine (ms2io6A) at position 37 in tRNAs. The protein is tRNA 2-(methylsulfanyl)-N(6)-isopentenyladenosine(37) hydroxylase of Pseudomonas putida (strain ATCC 47054 / DSM 6125 / CFBP 8728 / NCIMB 11950 / KT2440).